A 263-amino-acid chain; its full sequence is Virulence plasmid protein pGP6-D-related protein (263 aa).

Belongs to the UPF0137 (pGP6-D) family.

The protein is Virulence plasmid protein pGP6-D-related protein of Chlamydia trachomatis serovar D (strain ATCC VR-885 / DSM 19411 / UW-3/Cx).